A 92-amino-acid polypeptide reads, in one-letter code: MKLCVSAFSLLLLVAAFCDSVLSAPIGSDPPTSCCFSYTSRKIHRNFVMDYYETSSLCSQPAVVFLTKKGRQICADPSEPWVNEYVNDLELN.

The first 23 residues, Met1 to Ser23, serve as a signal peptide directing secretion. Disulfide bonds link Cys34-Cys58 and Cys35-Cys74.

This sequence belongs to the intercrine beta (chemokine CC) family. In terms of assembly, homodimer.

The protein localises to the secreted. In terms of biological role, monokine with inflammatory and chemokinetic properties. The protein is C-C motif chemokine 4 (Ccl4) of Rattus norvegicus (Rat).